We begin with the raw amino-acid sequence, 441 residues long: Mannose-6-phosphate isomerase 2 (441 aa).

Zn(2+) is bound by residues glutamine 131, histidine 133, glutamate 158, and histidine 296. Arginine 315 is a catalytic residue.

Belongs to the mannose-6-phosphate isomerase type 1 family. It depends on Zn(2+) as a cofactor. As to expression, not expressed in any organs under light (at protein level).

The catalysed reaction is D-mannose 6-phosphate = D-fructose 6-phosphate. The protein operates within nucleotide-sugar biosynthesis; GDP-alpha-D-mannose biosynthesis; alpha-D-mannose 1-phosphate from D-fructose 6-phosphate: step 1/2. Its activity is regulated as follows. Inhibited by EDTA, Zn(2+), Cd(2+), DTT, p-chloromercuribenzoate and L-ascorbic acid (AsA). Involved in the synthesis of the GDP-mannose and dolichol-phosphate-mannose required for a number of critical mannosyl transfer reactions. In Arabidopsis thaliana (Mouse-ear cress), this protein is Mannose-6-phosphate isomerase 2 (PMI2).